The primary structure comprises 363 residues: tRNA(Met) cytidine acetate ligase (363 aa).

ATP contacts are provided by residues 7 to 20, G96, N152, and R175; that span reads IAEFNPFHNGHKYL.

The protein belongs to the TmcAL family.

Its subcellular location is the cytoplasm. It catalyses the reaction cytidine(34) in elongator tRNA(Met) + acetate + ATP = N(4)-acetylcytidine(34) in elongator tRNA(Met) + AMP + diphosphate. Functionally, catalyzes the formation of N(4)-acetylcytidine (ac(4)C) at the wobble position of elongator tRNA(Met), using acetate and ATP as substrates. First activates an acetate ion to form acetyladenylate (Ac-AMP) and then transfers the acetyl group to tRNA to form ac(4)C34. This is tRNA(Met) cytidine acetate ligase from Streptococcus thermophilus (strain CNRZ 1066).